A 280-amino-acid polypeptide reads, in one-letter code: Probable endonuclease 4 (280 aa).

Zn(2+) is bound by residues histidine 69, histidine 109, glutamate 145, aspartate 179, histidine 182, histidine 216, aspartate 229, histidine 231, and glutamate 261.

This sequence belongs to the AP endonuclease 2 family. Requires Zn(2+) as cofactor.

It carries out the reaction Endonucleolytic cleavage to 5'-phosphooligonucleotide end-products.. Its function is as follows. Endonuclease IV plays a role in DNA repair. It cleaves phosphodiester bonds at apurinic or apyrimidinic (AP) sites, generating a 3'-hydroxyl group and a 5'-terminal sugar phosphate. This chain is Probable endonuclease 4, found in Actinobacillus pleuropneumoniae serotype 7 (strain AP76).